The sequence spans 227 residues: Phosphoribosylformylglycinamidine synthase subunit PurQ (227 aa).

The Glutamine amidotransferase type-1 domain maps to 3 to 225 (FAVIVLPGSN…VKNWRDTHVT (223 aa)). Cysteine 86 functions as the Nucleophile in the catalytic mechanism. Catalysis depends on residues histidine 194 and glutamate 196.

Part of the FGAM synthase complex composed of 1 PurL, 1 PurQ and 2 PurS subunits.

It localises to the cytoplasm. The enzyme catalyses N(2)-formyl-N(1)-(5-phospho-beta-D-ribosyl)glycinamide + L-glutamine + ATP + H2O = 2-formamido-N(1)-(5-O-phospho-beta-D-ribosyl)acetamidine + L-glutamate + ADP + phosphate + H(+). It catalyses the reaction L-glutamine + H2O = L-glutamate + NH4(+). It functions in the pathway purine metabolism; IMP biosynthesis via de novo pathway; 5-amino-1-(5-phospho-D-ribosyl)imidazole from N(2)-formyl-N(1)-(5-phospho-D-ribosyl)glycinamide: step 1/2. Part of the phosphoribosylformylglycinamidine synthase complex involved in the purines biosynthetic pathway. Catalyzes the ATP-dependent conversion of formylglycinamide ribonucleotide (FGAR) and glutamine to yield formylglycinamidine ribonucleotide (FGAM) and glutamate. The FGAM synthase complex is composed of three subunits. PurQ produces an ammonia molecule by converting glutamine to glutamate. PurL transfers the ammonia molecule to FGAR to form FGAM in an ATP-dependent manner. PurS interacts with PurQ and PurL and is thought to assist in the transfer of the ammonia molecule from PurQ to PurL. The sequence is that of Phosphoribosylformylglycinamidine synthase subunit PurQ from Bacillus pumilus (strain SAFR-032).